Consider the following 95-residue polypeptide: Cytosolic calcium-binding protein 3 (95 aa).

A run of 6 repeats spans residues 30–35 (VEDAEK), 39–43 (DEEEK), 54–59 (VEEEKK), 67–71 (PEEKK), 75–79 (LEEKQ), and 90–94 (VEKAK). Residues 30 to 94 (VEDAEKTNED…AEEVAVEKAK (65 aa)) are 6 X 5 AA approximate repeats of V-E-E-K-K. The disordered stretch occupies residues 54 to 95 (VEEEKKAEEVTETPEEKKTEALEEKQTEVAAAEEVAVEKAKE). A compositionally biased stretch (basic and acidic residues) spans 55-80 (EEEKKAEEVTETPEEKKTEALEEKQT).

As to expression, low levels in roots (e.g. in cambium) and barely expressed in stems, shoots, flowers, siliques and leaves.

It is found in the cytoplasm. It localises to the cytosol. Its function is as follows. Binds calcium Ca(2+) and may act as a signal mediator to buffer Ca(2+). The chain is Cytosolic calcium-binding protein 3 from Arabidopsis thaliana (Mouse-ear cress).